The following is a 755-amino-acid chain: Cellulose synthase-like protein B3 (755 aa).

The next 2 helical transmembrane spans lie at 24 to 44 (VVDL…ILLM) and 51 to 71 (WVVA…ITSI). Residues Asp136 and Asp461 contribute to the active site. 6 consecutive transmembrane segments (helical) span residues 534-556 (YLYI…LPAY), 569-589 (VYLG…LWEF), 615-635 (LFSI…VFIV), 674-694 (FLPG…CSVG), 702-722 (GSGL…LPFL), and 733-753 (IPWS…VFSV).

Belongs to the glycosyltransferase 2 family. Plant cellulose synthase-like B subfamily. Expressed in young seedlings, primarily in the vascular tissue.

It localises to the golgi apparatus membrane. Its function is as follows. Thought to be a Golgi-localized beta-glycan synthase that polymerize the backbones of noncellulosic polysaccharides (hemicelluloses) of plant cell wall. This Arabidopsis thaliana (Mouse-ear cress) protein is Cellulose synthase-like protein B3 (CSLB3).